The chain runs to 101 residues: Aspartyl/glutamyl-tRNA(Asn/Gln) amidotransferase subunit C (101 aa).

Belongs to the GatC family. Heterotrimer of A, B and C subunits.

It catalyses the reaction L-glutamyl-tRNA(Gln) + L-glutamine + ATP + H2O = L-glutaminyl-tRNA(Gln) + L-glutamate + ADP + phosphate + H(+). The catalysed reaction is L-aspartyl-tRNA(Asn) + L-glutamine + ATP + H2O = L-asparaginyl-tRNA(Asn) + L-glutamate + ADP + phosphate + 2 H(+). Allows the formation of correctly charged Asn-tRNA(Asn) or Gln-tRNA(Gln) through the transamidation of misacylated Asp-tRNA(Asn) or Glu-tRNA(Gln) in organisms which lack either or both of asparaginyl-tRNA or glutaminyl-tRNA synthetases. The reaction takes place in the presence of glutamine and ATP through an activated phospho-Asp-tRNA(Asn) or phospho-Glu-tRNA(Gln). The protein is Aspartyl/glutamyl-tRNA(Asn/Gln) amidotransferase subunit C of Enterococcus faecalis (strain ATCC 700802 / V583).